A 118-amino-acid polypeptide reads, in one-letter code: Small ribosomal subunit protein uS13 (118 aa).

Positions 94-118 (GLPLRGQRTRTNARTRKGPRKAIRK) are disordered.

This sequence belongs to the universal ribosomal protein uS13 family. As to quaternary structure, part of the 30S ribosomal subunit. Forms a loose heterodimer with protein S19. Forms two bridges to the 50S subunit in the 70S ribosome.

Its function is as follows. Located at the top of the head of the 30S subunit, it contacts several helices of the 16S rRNA. In the 70S ribosome it contacts the 23S rRNA (bridge B1a) and protein L5 of the 50S subunit (bridge B1b), connecting the 2 subunits; these bridges are implicated in subunit movement. Contacts the tRNAs in the A and P-sites. This chain is Small ribosomal subunit protein uS13, found in Stenotrophomonas maltophilia (strain R551-3).